Consider the following 212-residue polypeptide: External core antigen (212 aa).

A signal peptide spans 1–19 (MQLFHLCLIISCSCPTVQA). An HBEAG region spans residues 25–27 (GWL). The disordered stretch occupies residues 165 to 212 (NAPILSTLPETTVVRRRGRSPRRRTPSPRRRRSQSPRRRRSQSRESQC). Residues 178–205 (VRRRGRSPRRRTPSPRRRRSQSPRRRRS) show a composition bias toward basic residues. One copy of the 1; half-length repeat lies at 184–190 (SPRRRTP). A 3 X 8 AA repeats of S-P-R-R-R-R-S-Q region spans residues 184 to 206 (SPRRRTPSPRRRRSQSPRRRRSQ). A propeptide spanning residues 184–212 (SPRRRTPSPRRRRSQSPRRRRSQSRESQC) is cleaved from the precursor. A run of 2 repeats spans residues 191 to 198 (SPRRRRSQ) and 199 to 206 (SPRRRRSQ).

It belongs to the orthohepadnavirus precore antigen family. As to quaternary structure, homodimerizes. Post-translationally, phosphorylated. Cleaved by host furin.

The protein resides in the secreted. The protein localises to the host nucleus. May regulate immune response to the intracellular capsid in acting as a T-cell tolerogen, by having an immunoregulatory effect which prevents destruction of infected cells by cytotoxic T-cells. This immune regulation may predispose to chronicity during perinatal infections and prevent severe liver injury during adult infections. The polypeptide is External core antigen (Homo sapiens (Human)).